The chain runs to 131 residues: UPF0344 protein Sca_0577 (131 aa).

4 consecutive transmembrane segments (helical) span residues 1–21 (MLHLHIFSWVIGIILFIVSYI), 42–62 (LFLVLILFSGVWQVVEEFATA), 69–89 (LLTLKMICGIGVVALMEVTLV), and 99–119 (GLFWGTIALIIVTMALGIILP).

Belongs to the UPF0344 family.

It is found in the cell membrane. The protein is UPF0344 protein Sca_0577 of Staphylococcus carnosus (strain TM300).